A 213-amino-acid chain; its full sequence is ATP phosphoribosyltransferase (213 aa).

It belongs to the ATP phosphoribosyltransferase family. Short subfamily. In terms of assembly, heteromultimer composed of HisG and HisZ subunits.

The protein localises to the cytoplasm. It catalyses the reaction 1-(5-phospho-beta-D-ribosyl)-ATP + diphosphate = 5-phospho-alpha-D-ribose 1-diphosphate + ATP. It participates in amino-acid biosynthesis; L-histidine biosynthesis; L-histidine from 5-phospho-alpha-D-ribose 1-diphosphate: step 1/9. Functionally, catalyzes the condensation of ATP and 5-phosphoribose 1-diphosphate to form N'-(5'-phosphoribosyl)-ATP (PR-ATP). Has a crucial role in the pathway because the rate of histidine biosynthesis seems to be controlled primarily by regulation of HisG enzymatic activity. This chain is ATP phosphoribosyltransferase, found in Methylococcus capsulatus (strain ATCC 33009 / NCIMB 11132 / Bath).